Consider the following 1483-residue polypeptide: Heme-responsive zinc finger transcription factor HAP1 (1483 aa).

Residues 1–50 show a composition bias toward polar residues; the sequence is MSNTPYNSSVPSIASMTQSSVSRSPNMHTATTPGANTSSNSPPLHMSSDS. The tract at residues 1 to 56 is disordered; it reads MSNTPYNSSVPSIASMTQSSVSRSPNMHTATTPGANTSSNSPPLHMSSDSSKIKRK. Residues C64, C67, C74, C81, C84, and C93 each coordinate Zn(2+). The zn(2)-C6 fungal-type DNA-binding region spans 64–93; sequence CTICRKRKVKCDKLRPHCQQCTKTGVAHLC. A coiled-coil region spans residues 105–134; it reads EKELLKDNELKKLRERVKSLEKTLSKVHSS. Positions 162–176 are enriched in polar residues; the sequence is VNANTGSASSASHMH. Positions 162 to 208 are disordered; that stretch reads VNANTGSASSASHMHQQQQQQQQQEQQQDFSRSANANANSSSLSISN. Residues 177-208 are compositionally biased toward low complexity; the sequence is QQQQQQQQQEQQQDFSRSANANANSSSLSISN. The heme-responsive; required for HMC formation stretch occupies residues 244-444; the sequence is KGDPYLKLLW…NTIPHHQPQS (201 aa). 6 HRM repeats span residues 280 to 285, 299 to 304, 323 to 328, 347 to 352, 389 to 394, and 415 to 420; these read KCPINH, KCPVDH, RCPVDH, and RCPIDH. Composition is skewed to polar residues over residues 432–447 and 706–734; these read STHN…SGSH and QLNA…NPTL. 2 disordered regions span residues 432–458 and 706–767; these read STHN…NRKH and QLNA…KENQ. Low complexity predominate over residues 735 to 759; the sequence is NNNMSAATTNSSSRSGSADSRSGSN. Residues 1192-1197 form an HRM 7 repeat; sequence KCPVYQ. Residues 1384–1411 are disordered; the sequence is TANTDTSANGSALSTLTSPQGSDLASNS. The span at 1388 to 1411 shows a compositional bias: polar residues; that stretch reads DTSANGSALSTLTSPQGSDLASNS.

In terms of assembly, binds DNA as a homodimer. Interacts with SRO9 and YDJ1. In the absence of heme, binds to at least four cellular proteins, including YDJ1 and SRO9, forming a high-molecular-weight complex (HMC) which results in repression of its activity and dictates its DNA-binding specificity.

The protein resides in the nucleus. Functionally, regulation of oxygen dependent gene expression. It modulates the expression of Iso-1 (CYP1) and Iso-2 (CYP3) cytochrome c. In response to heme, promotes transcription of genes encoding functions required for respiration, controlling oxidative damage and repression of anaerobic genes. Binds to the sequence 5'-CGGNNNTNNCGG-3'. The chain is Heme-responsive zinc finger transcription factor HAP1 (HAP1) from Saccharomyces cerevisiae (strain RM11-1a) (Baker's yeast).